We begin with the raw amino-acid sequence, 243 residues long: tRNA (guanine-N(7)-)-methyltransferase (243 aa).

S-adenosyl-L-methionine-binding residues include glutamate 74, glutamate 99, aspartate 126, and aspartate 149. Residue aspartate 149 is part of the active site. Substrate-binding positions include lysine 153, aspartate 185, and 221-224 (TKFE).

This sequence belongs to the class I-like SAM-binding methyltransferase superfamily. TrmB family.

It catalyses the reaction guanosine(46) in tRNA + S-adenosyl-L-methionine = N(7)-methylguanosine(46) in tRNA + S-adenosyl-L-homocysteine. It participates in tRNA modification; N(7)-methylguanine-tRNA biosynthesis. Its function is as follows. Catalyzes the formation of N(7)-methylguanine at position 46 (m7G46) in tRNA. The polypeptide is tRNA (guanine-N(7)-)-methyltransferase (Psychromonas ingrahamii (strain DSM 17664 / CCUG 51855 / 37)).